Reading from the N-terminus, the 334-residue chain is Galactosylgalactosylxylosylprotein 3-beta-glucuronosyltransferase 1 (334 aa).

Over 1 to 6 (MPKRRD) the chain is Cytoplasmic. Residues 3 to 5 (KRR) are essential for transport from endoplasmic reticulum to Golgi apparatus and interaction with SAR1A. The helical; Signal-anchor for type II membrane protein transmembrane segment at 7 to 27 (ILAIVLIVLPWTLLITVWHQS) threads the bilayer. Residues 28–334 (SLAPLLAVHK…KGFTDPSVEI (307 aa)) are Lumenal-facing. UDP-alpha-D-glucuronate is bound at residue 91 to 93 (PTY). Phosphothreonine occurs at positions 103 and 108. D122 contributes to the UDP-alpha-D-glucuronate binding site. An N-linked (GlcNAc...) asparagine glycan is attached at N140. Positions 165 and 170 each coordinate UDP-alpha-D-glucuronate. Residue N184 is glycosylated (N-linked (GlcNAc...) asparagine). A UDP-alpha-D-glucuronate-binding site is contributed by 195–197 (DDD). D197 lines the Mn(2+) pocket. The interval 245 to 254 (FDPHRPFAID) is interaction with galactose moiety of substrate glycoprotein. The active-site Proton donor/acceptor is E284. Residue N303 is glycosylated (N-linked (GlcNAc...) asparagine). 311–313 (HTR) contributes to the UDP-alpha-D-glucuronate binding site.

The protein belongs to the glycosyltransferase 43 family. As to quaternary structure, homodimer. Interacts with SAR1A. It depends on Mn(2+) as a cofactor. The soluble form derives from the membrane form by proteolytic processing.

It localises to the golgi apparatus membrane. Its subcellular location is the secreted. The protein resides in the endoplasmic reticulum membrane. The enzyme catalyses 3-O-(beta-D-galactosyl-(1-&gt;3)-beta-D-galactosyl-(1-&gt;4)-beta-D-xylosyl)-L-seryl-[protein] + UDP-alpha-D-glucuronate = 3-O-(beta-D-GlcA-(1-&gt;3)-beta-D-Gal-(1-&gt;3)-beta-D-Gal-(1-&gt;4)-beta-D-Xyl)-L-seryl-[protein] + UDP + H(+). The protein operates within protein modification; protein glycosylation. In terms of biological role, involved in the biosynthesis of L2/HNK-1 carbohydrate epitope on glycoproteins. Can also play a role in glycosaminoglycan biosynthesis. Substrates include asialo-orosomucoid (ASOR), asialo-fetuin, and asialo-neural cell adhesion molecule. Requires sphingomyelin for activity: stearoyl-sphingomyelin was the most effective, followed by palmitoyl-sphingomyelin and lignoceroyl-sphingomyelin. Activity was demonstrated only for sphingomyelin with a saturated fatty acid and not for that with an unsaturated fatty acid, regardless of the length of the acyl group. The sequence is that of Galactosylgalactosylxylosylprotein 3-beta-glucuronosyltransferase 1 from Mus musculus (Mouse).